A 341-amino-acid polypeptide reads, in one-letter code: Ferredoxin--NADP reductase (341 aa).

The FAD site is built by glutamate 36, glutamine 44, phenylalanine 49, valine 89, phenylalanine 123, aspartate 289, and threonine 329.

This sequence belongs to the ferredoxin--NADP reductase type 2 family. As to quaternary structure, homodimer. FAD is required as a cofactor.

It catalyses the reaction 2 reduced [2Fe-2S]-[ferredoxin] + NADP(+) + H(+) = 2 oxidized [2Fe-2S]-[ferredoxin] + NADPH. The polypeptide is Ferredoxin--NADP reductase (Ligilactobacillus salivarius (strain UCC118) (Lactobacillus salivarius)).